Here is a 491-residue protein sequence, read N- to C-terminus: Ketol-acid reductoisomerase (NADP(+)) (491 aa).

The 194-residue stretch at 15–208 (AQLGKCRFMG…GGHRAGVLES (194 aa)) folds into the KARI N-terminal Rossmann domain. NADP(+) is bound by residues 45 to 48 (CGAQ), arginine 68, arginine 76, serine 78, and 108 to 110 (DKQ). The active site involves histidine 132. Glycine 158 is an NADP(+) binding site. 2 consecutive KARI C-terminal knotted domains span residues 209 to 344 (SFVA…TAPQ) and 345 to 484 (YEGK…MTDM). Mg(2+)-binding residues include aspartate 217, glutamate 221, glutamate 389, and glutamate 393. A substrate-binding site is contributed by serine 414.

The protein belongs to the ketol-acid reductoisomerase family. Requires Mg(2+) as cofactor.

It carries out the reaction (2R)-2,3-dihydroxy-3-methylbutanoate + NADP(+) = (2S)-2-acetolactate + NADPH + H(+). The enzyme catalyses (2R,3R)-2,3-dihydroxy-3-methylpentanoate + NADP(+) = (S)-2-ethyl-2-hydroxy-3-oxobutanoate + NADPH + H(+). It functions in the pathway amino-acid biosynthesis; L-isoleucine biosynthesis; L-isoleucine from 2-oxobutanoate: step 2/4. It participates in amino-acid biosynthesis; L-valine biosynthesis; L-valine from pyruvate: step 2/4. Its function is as follows. Involved in the biosynthesis of branched-chain amino acids (BCAA). Catalyzes an alkyl-migration followed by a ketol-acid reduction of (S)-2-acetolactate (S2AL) to yield (R)-2,3-dihydroxy-isovalerate. In the isomerase reaction, S2AL is rearranged via a Mg-dependent methyl migration to produce 3-hydroxy-3-methyl-2-ketobutyrate (HMKB). In the reductase reaction, this 2-ketoacid undergoes a metal-dependent reduction by NADPH to yield (R)-2,3-dihydroxy-isovalerate. The chain is Ketol-acid reductoisomerase (NADP(+)) from Klebsiella pneumoniae (strain 342).